Reading from the N-terminus, the 127-residue chain is Glycine cleavage system H protein (127 aa).

One can recognise a Lipoyl-binding domain in the interval 24 to 106 (TVTVGITDHA…FEGAWIAKIK (83 aa)). The residue at position 65 (Lys65) is an N6-lipoyllysine.

It belongs to the GcvH family. In terms of assembly, the glycine cleavage system is composed of four proteins: P, T, L and H. The cofactor is (R)-lipoate.

In terms of biological role, the glycine cleavage system catalyzes the degradation of glycine. The H protein shuttles the methylamine group of glycine from the P protein to the T protein. The chain is Glycine cleavage system H protein from Marinomonas sp. (strain MWYL1).